A 236-amino-acid chain; its full sequence is Phosphoribosylaminoimidazole-succinocarboxamide synthase (236 aa).

It belongs to the SAICAR synthetase family.

The enzyme catalyses 5-amino-1-(5-phospho-D-ribosyl)imidazole-4-carboxylate + L-aspartate + ATP = (2S)-2-[5-amino-1-(5-phospho-beta-D-ribosyl)imidazole-4-carboxamido]succinate + ADP + phosphate + 2 H(+). It participates in purine metabolism; IMP biosynthesis via de novo pathway; 5-amino-1-(5-phospho-D-ribosyl)imidazole-4-carboxamide from 5-amino-1-(5-phospho-D-ribosyl)imidazole-4-carboxylate: step 1/2. In Chlorobium limicola (strain DSM 245 / NBRC 103803 / 6330), this protein is Phosphoribosylaminoimidazole-succinocarboxamide synthase.